Consider the following 424-residue polypeptide: Probable carboxypeptidase AN5749 (424 aa).

The first 17 residues, 1 to 17, serve as a signal peptide directing secretion; that stretch reads MNLSILAALALVSFSTA. A glycan (N-linked (GlcNAc...) asparagine) is linked at Asn-58. Asp-139 serves as a coordination point for Zn(2+). Glu-171 acts as the Proton acceptor in catalysis. Glu-172 contributes to the Zn(2+) binding site. 2 N-linked (GlcNAc...) asparagine glycosylation sites follow: Asn-184 and Asn-323.

Belongs to the peptidase M20A family. Requires Zn(2+) as cofactor.

It is found in the secreted. This chain is Probable carboxypeptidase AN5749, found in Emericella nidulans (strain FGSC A4 / ATCC 38163 / CBS 112.46 / NRRL 194 / M139) (Aspergillus nidulans).